We begin with the raw amino-acid sequence, 323 residues long: tRNA U34 carboxymethyltransferase (323 aa).

Residues Lys-91, Trp-105, Lys-110, Gly-130, 180–181 (IE), Met-196, Tyr-200, and Arg-315 each bind carboxy-S-adenosyl-L-methionine.

It belongs to the class I-like SAM-binding methyltransferase superfamily. CmoB family. Homotetramer.

It catalyses the reaction carboxy-S-adenosyl-L-methionine + 5-hydroxyuridine(34) in tRNA = 5-carboxymethoxyuridine(34) in tRNA + S-adenosyl-L-homocysteine + H(+). Catalyzes carboxymethyl transfer from carboxy-S-adenosyl-L-methionine (Cx-SAM) to 5-hydroxyuridine (ho5U) to form 5-carboxymethoxyuridine (cmo5U) at position 34 in tRNAs. The chain is tRNA U34 carboxymethyltransferase from Citrifermentans bemidjiense (strain ATCC BAA-1014 / DSM 16622 / JCM 12645 / Bem) (Geobacter bemidjiensis).